The sequence spans 112 residues: Toxin-like structure LSTX-D10 (112 aa).

An N-terminal signal peptide occupies residues 1–20; the sequence is MMKVLVVVALLVTLISYSSS. Residues 21–41 constitute a propeptide that is removed on maturation; that stretch reads EGIDDLEADELLSLMANEQTR. 4 disulfide bridges follow: cysteine 45–cysteine 60, cysteine 52–cysteine 69, cysteine 59–cysteine 84, and cysteine 71–cysteine 82.

This sequence belongs to the neurotoxin 19 (CSTX) family. 01 subfamily. Expressed by the venom gland.

The protein localises to the secreted. This Lycosa singoriensis (Wolf spider) protein is Toxin-like structure LSTX-D10.